Here is a 617-residue protein sequence, read N- to C-terminus: Proline--tRNA ligase (617 aa).

The protein belongs to the class-II aminoacyl-tRNA synthetase family. ProS type 1 subfamily. In terms of assembly, homodimer.

The protein resides in the cytoplasm. It carries out the reaction tRNA(Pro) + L-proline + ATP = L-prolyl-tRNA(Pro) + AMP + diphosphate. Catalyzes the attachment of proline to tRNA(Pro) in a two-step reaction: proline is first activated by ATP to form Pro-AMP and then transferred to the acceptor end of tRNA(Pro). As ProRS can inadvertently accommodate and process non-cognate amino acids such as alanine and cysteine, to avoid such errors it has two additional distinct editing activities against alanine. One activity is designated as 'pretransfer' editing and involves the tRNA(Pro)-independent hydrolysis of activated Ala-AMP. The other activity is designated 'posttransfer' editing and involves deacylation of mischarged Ala-tRNA(Pro). The misacylated Cys-tRNA(Pro) is not edited by ProRS. The protein is Proline--tRNA ligase of Treponema pallidum (strain Nichols).